We begin with the raw amino-acid sequence, 635 residues long: Biosynthetic arginine decarboxylase (635 aa).

K103 carries the post-translational modification N6-(pyridoxal phosphate)lysine. 283-293 contacts substrate; sequence FDVGGGLGVDY.

Belongs to the Orn/Lys/Arg decarboxylase class-II family. SpeA subfamily. It depends on Mg(2+) as a cofactor. Pyridoxal 5'-phosphate serves as cofactor.

The enzyme catalyses L-arginine + H(+) = agmatine + CO2. It participates in amine and polyamine biosynthesis; agmatine biosynthesis; agmatine from L-arginine: step 1/1. Its function is as follows. Catalyzes the biosynthesis of agmatine from arginine. The chain is Biosynthetic arginine decarboxylase from Proteus mirabilis (strain HI4320).